The sequence spans 137 residues: Putative pre-16S rRNA nuclease (137 aa).

Belongs to the YqgF nuclease family.

It localises to the cytoplasm. In terms of biological role, could be a nuclease involved in processing of the 5'-end of pre-16S rRNA. The protein is Putative pre-16S rRNA nuclease of Buchnera aphidicola subsp. Baizongia pistaciae (strain Bp).